Here is a 398-residue protein sequence, read N- to C-terminus: tRNA-specific 2-thiouridylase MnmA (398 aa).

ATP-binding positions include 20–27 (AMSGGVDS) and L46. C114 serves as the catalytic Nucleophile. Residues C114 and C210 are joined by a disulfide bond. G138 lines the ATP pocket. The interval 160 to 162 (RDQ) is interaction with tRNA. C210 functions as the Cysteine persulfide intermediate in the catalytic mechanism.

The protein belongs to the MnmA/TRMU family.

It is found in the cytoplasm. The catalysed reaction is S-sulfanyl-L-cysteinyl-[protein] + uridine(34) in tRNA + AH2 + ATP = 2-thiouridine(34) in tRNA + L-cysteinyl-[protein] + A + AMP + diphosphate + H(+). Catalyzes the 2-thiolation of uridine at the wobble position (U34) of tRNA, leading to the formation of s(2)U34. This Brucella melitensis biotype 1 (strain ATCC 23456 / CCUG 17765 / NCTC 10094 / 16M) protein is tRNA-specific 2-thiouridylase MnmA.